Consider the following 285-residue polypeptide: 4-hydroxybenzoate octaprenyltransferase (285 aa).

7 helical membrane passes run 33–53, 93–113, 134–154, 166–186, 209–229, 233–253, and 265–285; these read FLAA…LGVV, LILF…MNTL, ITYL…PMAY, WLLF…YAMV, LMIG…GIQL, SLYN…QWLI, and FLNN…SVLI.

It belongs to the UbiA prenyltransferase family. It depends on Mg(2+) as a cofactor.

Its subcellular location is the cell inner membrane. The catalysed reaction is all-trans-octaprenyl diphosphate + 4-hydroxybenzoate = 4-hydroxy-3-(all-trans-octaprenyl)benzoate + diphosphate. It participates in cofactor biosynthesis; ubiquinone biosynthesis. Its function is as follows. Catalyzes the prenylation of para-hydroxybenzoate (PHB) with an all-trans polyprenyl group. Mediates the second step in the final reaction sequence of ubiquinone-8 (UQ-8) biosynthesis, which is the condensation of the polyisoprenoid side chain with PHB, generating the first membrane-bound Q intermediate 3-octaprenyl-4-hydroxybenzoate. In Aliivibrio salmonicida (strain LFI1238) (Vibrio salmonicida (strain LFI1238)), this protein is 4-hydroxybenzoate octaprenyltransferase.